A 391-amino-acid polypeptide reads, in one-letter code: Zinc finger protein 414 (391 aa).

Positions 1-110 (MDEEPSGPSL…RRPPPGKQIP (110 aa)) are disordered. Polar residues predominate over residues 84–93 (GPTSTVSGTS). 3 consecutive C2H2-type zinc fingers follow at residues 109–133 (IPCS…LRTH), 145–169 (FRCS…GKLH), and 176–201 (FKCE…CAEH). Disordered stretches follow at residues 201 to 243 (HAQS…LEPF), 274 to 312 (LAAA…SGHA), and 344 to 391 (HLED…FSPL). Over residues 214–226 (LDRESPASERPPE) the composition is skewed to basic and acidic residues. Over residues 227 to 236 (SDPAPAPGLP) the composition is skewed to pro residues. Low complexity predominate over residues 274–286 (LAAAPGPPASSAA). The C2H2-type 4 zinc-finger motif lies at 326–348 (YSCMQCAFSTASRPAMTLHLEDH). Residues 353–372 (PAAPAPGQPRPDAPADPAPL) are compositionally biased toward pro residues.

Belongs to the krueppel C2H2-type zinc-finger protein family.

Its subcellular location is the nucleus. In terms of biological role, may be involved in transcriptional regulation. The chain is Zinc finger protein 414 (ZNF414) from Bos taurus (Bovine).